Here is a 360-residue protein sequence, read N- to C-terminus: GTPase Obg (360 aa).

The region spanning M1–I156 is the Obg domain. An OBG-type G domain is found at A157–Q360. Residues G163–S170, F188–V192, D210–G213, N279–D282, and S341–V343 contribute to the GTP site. Mg(2+)-binding residues include S170 and T190.

It belongs to the TRAFAC class OBG-HflX-like GTPase superfamily. OBG GTPase family. Monomer. It depends on Mg(2+) as a cofactor.

It localises to the cytoplasm. Its function is as follows. An essential GTPase which binds GTP, GDP and possibly (p)ppGpp with moderate affinity, with high nucleotide exchange rates and a fairly low GTP hydrolysis rate. Plays a role in control of the cell cycle, stress response, ribosome biogenesis and in those bacteria that undergo differentiation, in morphogenesis control. This is GTPase Obg from Helicobacter pylori (strain P12).